The following is a 611-amino-acid chain: mRNA export factor GLE1 (611 aa).

2 disordered regions span residues 69–94 and 220–243; these read SEDEMESDEGEESDDEEEEEDHSQIC and KIRSEEAQEEARRKERAHQEEKIR. Residues 71–89 are compositionally biased toward acidic residues; the sequence is DEMESDEGEESDDEEEEED.

Belongs to the GLE1 family. Part of the nuclear pore complex (NPC). The NPC has an eight-fold symmetrical structure comprising a central transport channel and two rings, the cytoplasmic and nuclear rings, to which eight filaments are attached. The cytoplasmic filaments have loose ends, while the nuclear filaments are joined in a distal ring, forming a nuclear basket. NPCs are highly dynamic in configuration and composition, and can be devided in 3 subcomplexes, the NUP62 subcomplex, the NUP107-160 subcomplex and the NUP93 subcomplex, containing approximately 30 different nucleoporin proteins.

It localises to the nucleus envelope. It is found in the nucleus. The protein resides in the nuclear pore complex. Its function is as follows. Required for seed viability. In Arabidopsis thaliana (Mouse-ear cress), this protein is mRNA export factor GLE1.